The sequence spans 247 residues: Probable transcriptional regulatory protein LBF_0056 (247 aa).

It belongs to the TACO1 family.

It is found in the cytoplasm. This Leptospira biflexa serovar Patoc (strain Patoc 1 / Ames) protein is Probable transcriptional regulatory protein LBF_0056.